The primary structure comprises 118 residues: Large ribosomal subunit protein bL20 (118 aa).

Belongs to the bacterial ribosomal protein bL20 family.

Binds directly to 23S ribosomal RNA and is necessary for the in vitro assembly process of the 50S ribosomal subunit. It is not involved in the protein synthesizing functions of that subunit. This Psychrobacter arcticus (strain DSM 17307 / VKM B-2377 / 273-4) protein is Large ribosomal subunit protein bL20.